Reading from the N-terminus, the 514-residue chain is Membrane-bound lytic murein transglycosylase F (514 aa).

The first 30 residues, 1–30 (MLSNNPLITKFRELFTVALVLALLSGCQWQ), serve as a signal peptide directing secretion. The interval 31 to 271 (DDNLTDLEKI…QLEEKYFGHV (241 aa)) is non-LT domain. The tract at residues 272–514 (GSFDYVDTRA…KTIEDPGPSQ (243 aa)) is LT domain. E316 is a catalytic residue. Positions 482–514 (PVPPRQANVDGSLNNEAAISSAEKTIEDPGPSQ) are disordered. Positions 490–499 (VDGSLNNEAA) are enriched in polar residues.

It in the N-terminal section; belongs to the bacterial solute-binding protein 3 family. This sequence in the C-terminal section; belongs to the transglycosylase Slt family.

The protein resides in the cell outer membrane. The enzyme catalyses Exolytic cleavage of the (1-&gt;4)-beta-glycosidic linkage between N-acetylmuramic acid (MurNAc) and N-acetylglucosamine (GlcNAc) residues in peptidoglycan, from either the reducing or the non-reducing ends of the peptidoglycan chains, with concomitant formation of a 1,6-anhydrobond in the MurNAc residue.. Its function is as follows. Murein-degrading enzyme that degrades murein glycan strands and insoluble, high-molecular weight murein sacculi, with the concomitant formation of a 1,6-anhydromuramoyl product. Lytic transglycosylases (LTs) play an integral role in the metabolism of the peptidoglycan (PG) sacculus. Their lytic action creates space within the PG sacculus to allow for its expansion as well as for the insertion of various structures such as secretion systems and flagella. This is Membrane-bound lytic murein transglycosylase F from Photobacterium profundum (strain SS9).